The sequence spans 113 residues: Putative pterin-4-alpha-carbinolamine dehydratase (113 aa).

Belongs to the pterin-4-alpha-carbinolamine dehydratase family.

It carries out the reaction (4aS,6R)-4a-hydroxy-L-erythro-5,6,7,8-tetrahydrobiopterin = (6R)-L-erythro-6,7-dihydrobiopterin + H2O. In Nitrosospira multiformis (strain ATCC 25196 / NCIMB 11849 / C 71), this protein is Putative pterin-4-alpha-carbinolamine dehydratase.